The sequence spans 497 residues: 4,4'-diaponeurosporene oxygenase (497 aa).

Position 7–19 (7–19) interacts with FAD; the sequence is VIGGGLGGISAAI.

It belongs to the carotenoid/retinoid oxidoreductase family. CrtP subfamily. The cofactor is FAD.

The catalysed reaction is all-trans-4,4'-diaponeurosporene + 2 AH2 + 2 O2 = 4,4'-diaponeurosporenal + 2 A + 3 H2O. Its pathway is carotenoid biosynthesis; staphyloxanthin biosynthesis; staphyloxanthin from farnesyl diphosphate: step 3/5. Involved in the biosynthesis of the yellow-orange carotenoid staphyloxanthin, which plays a role in the virulence via its protective function against oxidative stress. Catalyzes the oxidation of the terminal methyl side group of 4,4'-diaponeurosporene to form 4,4'-diaponeurosporen-4-al. The protein is 4,4'-diaponeurosporene oxygenase of Staphylococcus aureus (strain MW2).